A 464-amino-acid polypeptide reads, in one-letter code: MSTDKTNQSWGGRFSEPVDAFVARFTASVDFDKRLYRHDIMGSIAHATMLAQVGVLNDKERDTIIDGLKTIQGEIEAGNFDWRVDLEDVHMNIEARLTDRIGITGKKLHTGRSRNDQVATDIRLWLRDEIDIILGEITRLQQGLLEQAEREAETIMPGFTHLQTAQPVTFGHHLLAWFEMLSRDYERLVDCRKRANRMPLGSAALAGTTYPIDRELTCKLLGFEAVAGNSLDGVSDRDFAIEFCAAASIAMMHLSRFSEELVLWTSAQFQFIDLPDRFCTGSSIMPQKKNPDVPELVRGKTGRVFGALTGLLTLMKGQPLAYNKDNQEDKEPLFDAADTLRDSLRAFADMIPAIKPKHAIMREAALRGFSTATDLADYLVRRGLPFRDCHEIVGHAVKYGVDTGKDLAEMSLDELRQFSDQIEQDVFAVLTLEGSVNARNHIGGTAPAQVRAAVARGKALLASR.

The protein belongs to the lyase 1 family. Argininosuccinate lyase subfamily.

It localises to the cytoplasm. The catalysed reaction is 2-(N(omega)-L-arginino)succinate = fumarate + L-arginine. It functions in the pathway amino-acid biosynthesis; L-arginine biosynthesis; L-arginine from L-ornithine and carbamoyl phosphate: step 3/3. This chain is Argininosuccinate lyase, found in Pseudomonas entomophila (strain L48).